A 204-amino-acid chain; its full sequence is Ribonuclease HII (204 aa).

In terms of domain architecture, RNase H type-2 spans threonine 17–leucine 204. The a divalent metal cation site is built by aspartate 23, glutamate 24, and aspartate 115.

It belongs to the RNase HII family. Mn(2+) is required as a cofactor. It depends on Mg(2+) as a cofactor.

It is found in the cytoplasm. The enzyme catalyses Endonucleolytic cleavage to 5'-phosphomonoester.. Its function is as follows. Endonuclease that specifically degrades the RNA of RNA-DNA hybrids. This Psychromonas ingrahamii (strain DSM 17664 / CCUG 51855 / 37) protein is Ribonuclease HII.